We begin with the raw amino-acid sequence, 122 residues long: NADH-quinone oxidoreductase subunit A (122 aa).

The next 3 membrane-spanning stretches (helical) occupy residues 10–30 (MIVG…LTLG), 66–86 (IFAL…PWAV), and 91–111 (LGLF…IGLA).

Belongs to the complex I subunit 3 family. NDH-1 is composed of 14 different subunits. Subunits NuoA, H, J, K, L, M, N constitute the membrane sector of the complex.

The protein localises to the cell membrane. The catalysed reaction is a quinone + NADH + 5 H(+)(in) = a quinol + NAD(+) + 4 H(+)(out). NDH-1 shuttles electrons from NADH, via FMN and iron-sulfur (Fe-S) centers, to quinones in the respiratory chain. The immediate electron acceptor for the enzyme in this species is believed to be a menaquinone. Couples the redox reaction to proton translocation (for every two electrons transferred, four hydrogen ions are translocated across the cytoplasmic membrane), and thus conserves the redox energy in a proton gradient. The protein is NADH-quinone oxidoreductase subunit A of Bacillus cytotoxicus (strain DSM 22905 / CIP 110041 / 391-98 / NVH 391-98).